A 62-amino-acid chain; its full sequence is DNA-directed RNA polymerase subunit Rpo10 (62 aa).

4 residues coordinate Zn(2+): C6, C9, C43, and C44.

It belongs to the archaeal Rpo10/eukaryotic RPB10 RNA polymerase subunit family. In terms of assembly, part of the RNA polymerase complex. Requires Zn(2+) as cofactor.

The protein resides in the cytoplasm. The catalysed reaction is RNA(n) + a ribonucleoside 5'-triphosphate = RNA(n+1) + diphosphate. Functionally, DNA-dependent RNA polymerase (RNAP) catalyzes the transcription of DNA into RNA using the four ribonucleoside triphosphates as substrates. In Methanoregula boonei (strain DSM 21154 / JCM 14090 / 6A8), this protein is DNA-directed RNA polymerase subunit Rpo10.